Consider the following 160-residue polypeptide: MTKEVIVESFELDHTIVKAPYVRLISEEFGPKGDRITNFDVRLVQPNQNSIETAGLHTIEHLLAKLIRQRIDGMIDCSPFGCRTGFHLIMWGKHSSTDIAKVIKSSLEEIATGITWEDVPGTTLESCGNYKDHSLFAAKEWAQLIIDQGISDDPFSRHVI.

3 residues coordinate Fe cation: His-57, His-61, and Cys-127.

This sequence belongs to the LuxS family. Homodimer. Fe cation serves as cofactor.

It carries out the reaction S-(5-deoxy-D-ribos-5-yl)-L-homocysteine = (S)-4,5-dihydroxypentane-2,3-dione + L-homocysteine. Involved in the synthesis of autoinducer 2 (AI-2) which is secreted by bacteria and is used to communicate both the cell density and the metabolic potential of the environment. The regulation of gene expression in response to changes in cell density is called quorum sensing. Catalyzes the transformation of S-ribosylhomocysteine (RHC) to homocysteine (HC) and 4,5-dihydroxy-2,3-pentadione (DPD). In Streptococcus pyogenes serotype M3 (strain SSI-1), this protein is S-ribosylhomocysteine lyase (luxS).